A 434-amino-acid polypeptide reads, in one-letter code: Enolase (434 aa).

Position 166 (Gln-166) interacts with (2R)-2-phosphoglycerate. Glu-208 serves as the catalytic Proton donor. The Mg(2+) site is built by Asp-245, Glu-290, and Asp-317. (2R)-2-phosphoglycerate contacts are provided by Lys-342, Arg-371, Ser-372, and Lys-393. The Proton acceptor role is filled by Lys-342.

The protein belongs to the enolase family. It depends on Mg(2+) as a cofactor.

The protein localises to the cytoplasm. It is found in the secreted. Its subcellular location is the cell surface. It catalyses the reaction (2R)-2-phosphoglycerate = phosphoenolpyruvate + H2O. It functions in the pathway carbohydrate degradation; glycolysis; pyruvate from D-glyceraldehyde 3-phosphate: step 4/5. Its function is as follows. Catalyzes the reversible conversion of 2-phosphoglycerate (2-PG) into phosphoenolpyruvate (PEP). It is essential for the degradation of carbohydrates via glycolysis. In Caldicellulosiruptor bescii (strain ATCC BAA-1888 / DSM 6725 / KCTC 15123 / Z-1320) (Anaerocellum thermophilum), this protein is Enolase.